A 487-amino-acid polypeptide reads, in one-letter code: MLTMVGLTPAEDRSEIAFFDVETTIPFRVGQGYAILEFGSILVCPKKLVELKNYSVLVRPANLNLITPRSVKCNGIKREDVESALTFADIADTVYDILHGRIWAGHNILKFDCPRIREAFAEIGRDPPEPKGTIDSLALLTQRFGRRAGDMKMATLATYFGLGNQTHRSLDDVRMNFEVLKYCATVLFLESSLPDELIENSVTTTTPETSSRRRRTIKKSPLQSPTDQQTGENMTTIPILSFVSSAEAQTDPFDMSTLRNEIAPEVLQSDVPMEEEQNQQSETVASEGTGDQEGFMELDKISVSSIRATHVPLYDGSQTMKLQLFLGDRPLQLHCPRLKVRFGINGKFMDKAGRRRLNFVIDLYPSLCNVLQECDSAAQTISVDSGSGSDWNPLVIPMKGFLNCPTARIHIPTELNGDIDRYAAEIHQKEFSGATATQKLISSNPKAEEIESLLNPRTVLDAFLSLEPYDYQQRAGIRLVARKLVIH.

In terms of domain architecture, Exonuclease spans 18–179 (FFDVETTIPF…LDDVRMNFEV (162 aa)). Mg(2+) contacts are provided by D20 and E22. Residue H167 is the Proton donor/acceptor of the active site. Residue D172 participates in Mg(2+) binding. 2 disordered regions span residues 200–233 (NSVTTTTPETSSRRRRTIKKSPLQSPTDQQTGEN) and 269–291 (SDVPMEEEQNQQSETVASEGTGD). The span at 221–233 (PLQSPTDQQTGEN) shows a compositional bias: polar residues.

Mg(2+) serves as cofactor. As to expression, expressed in the sieve elements and phloem pole pericycle cells.

It is found in the cytoplasm. Its subcellular location is the nucleus. Functionally, probable exonuclease involved in enuclation of sieve elements. The polypeptide is Protein NEN2 (Arabidopsis thaliana (Mouse-ear cress)).